The chain runs to 523 residues: Glycerate kinase (523 aa).

Ser-60 is modified (phosphoserine).

The protein belongs to the glycerate kinase type-2 family. Widely expressed.

The protein resides in the cytoplasm. Its subcellular location is the mitochondrion. It carries out the reaction (R)-glycerate + ATP = (2R)-3-phosphoglycerate + ADP + H(+). In Homo sapiens (Human), this protein is Glycerate kinase (GLYCTK).